The sequence spans 417 residues: NADH-quinone oxidoreductase subunit D (417 aa).

Belongs to the complex I 49 kDa subunit family. As to quaternary structure, NDH-1 is composed of 14 different subunits. Subunits NuoB, C, D, E, F, and G constitute the peripheral sector of the complex.

The protein localises to the cell inner membrane. It catalyses the reaction a quinone + NADH + 5 H(+)(in) = a quinol + NAD(+) + 4 H(+)(out). Its function is as follows. NDH-1 shuttles electrons from NADH, via FMN and iron-sulfur (Fe-S) centers, to quinones in the respiratory chain. The immediate electron acceptor for the enzyme in this species is believed to be ubiquinone. Couples the redox reaction to proton translocation (for every two electrons transferred, four hydrogen ions are translocated across the cytoplasmic membrane), and thus conserves the redox energy in a proton gradient. The sequence is that of NADH-quinone oxidoreductase subunit D from Chromobacterium violaceum (strain ATCC 12472 / DSM 30191 / JCM 1249 / CCUG 213 / NBRC 12614 / NCIMB 9131 / NCTC 9757 / MK).